The chain runs to 214 residues: Thymidylate kinase (214 aa).

Residue 10-17 (GGEGAGKS) participates in ATP binding.

This sequence belongs to the thymidylate kinase family.

The catalysed reaction is dTMP + ATP = dTDP + ADP. In terms of biological role, phosphorylation of dTMP to form dTDP in both de novo and salvage pathways of dTTP synthesis. This Brucella suis (strain ATCC 23445 / NCTC 10510) protein is Thymidylate kinase.